Reading from the N-terminus, the 373-residue chain is tRNA (guanine(26)-N(2))-dimethyltransferase (373 aa).

The 364-residue stretch at 2–365 (KIISEGETKL…AELSDLVVLI (364 aa)) folds into the Trm1 methyltransferase domain. S-adenosyl-L-methionine contacts are provided by Arg-35, Arg-66, Asp-86, Asp-113, and Ala-114.

The protein belongs to the class I-like SAM-binding methyltransferase superfamily. Trm1 family.

The catalysed reaction is guanosine(26) in tRNA + 2 S-adenosyl-L-methionine = N(2)-dimethylguanosine(26) in tRNA + 2 S-adenosyl-L-homocysteine + 2 H(+). In terms of biological role, dimethylates a single guanine residue at position 26 of a number of tRNAs using S-adenosyl-L-methionine as donor of the methyl groups. The sequence is that of tRNA (guanine(26)-N(2))-dimethyltransferase from Methanococcus maripaludis (strain C7 / ATCC BAA-1331).